Consider the following 922-residue polypeptide: Chaperone protein ClpC, chloroplastic (922 aa).

Residues 1 to 72 constitute a chloroplast transit peptide; that stretch reads MARVLAQSLS…RPGLDFHSKV (72 aa). Residues 92–234 enclose the Clp R domain; the sequence is FERFTEKAIK…RTQVIRMVGE (143 aa). Repeat stretches follow at residues 95-160 and 170-234; these read FTEK…IGRG and FTPR…MVGE. The tract at residues 255-502 is i; it reads LEEYGTNLTK…RVRLQHAQLP (248 aa). 300–307 lines the ATP pocket; it reads GEPGVGKT. A UVR domain is found at 509–544; sequence DKEVRKIVKEKEEYVRNQDFEKAGELRDKEMDLKAQ. The II stretch occupies residues 569-760; it reads VTEVDIQHIV…LLIMTSNVGS (192 aa). Position 643–650 (643–650) interacts with ATP; that stretch reads GPTGVGKS.

Belongs to the ClpA/ClpB family. ClpC subfamily.

It is found in the plastid. The protein localises to the chloroplast. In terms of biological role, molecular chaperone that may interact with a ClpP-like protease involved in degradation of denatured proteins in the chloroplast. The protein is Chaperone protein ClpC, chloroplastic of Pisum sativum (Garden pea).